Here is a 216-residue protein sequence, read N- to C-terminus: MSCSSALDCFIKNYLKSYQDTLSEFPRYYPLGEDSICIQGTFNADTDDTVFWQPVKRDNVADFSNVEHALNIQLHQDIHAFYGQYFSAPLPFTASFGDGELLQAWNQDDFENLQQNVIGHLIMKKKLKQPATWFIGVLGEGDEMLTVNNDDGSVWIEIPGEKQRTKLAESLTEFLESLSPMIKPPSKPVEELPHTVDHPGIWQRIKTMWDYLLRKK.

The protein belongs to the Syd family.

The protein localises to the cell inner membrane. Interacts with the SecY protein in vivo. May bind preferentially to an uncomplexed state of SecY, thus functioning either as a chelating agent for excess SecY in the cell or as a regulatory factor that negatively controls the translocase function. This is Protein Syd from Shewanella frigidimarina (strain NCIMB 400).